Reading from the N-terminus, the 65-residue chain is Protein YSY6 (65 aa).

Residues 45-65 (LGILLFLLVGGGVLQLISYIL) traverse the membrane as a helical segment.

It belongs to the RAMP4 family.

Its subcellular location is the membrane. The protein localises to the endoplasmic reticulum membrane. Interacts with target proteins during their translocation into the lumen of the endoplasmic reticulum. Protects unfolded target proteins against degradation during ER stress. May facilitate glycosylation of target proteins after termination of ER stress. The protein is Protein YSY6 (YSY6) of Saccharomyces cerevisiae (strain ATCC 204508 / S288c) (Baker's yeast).